The chain runs to 515 residues: ATP synthase subunit alpha (515 aa).

Residue 171–178 coordinates ATP; the sequence is GDRQTGKT.

It belongs to the ATPase alpha/beta chains family. As to quaternary structure, F-type ATPases have 2 components, CF(1) - the catalytic core - and CF(0) - the membrane proton channel. CF(1) has five subunits: alpha(3), beta(3), gamma(1), delta(1), epsilon(1). CF(0) has three main subunits: a(1), b(2) and c(9-12). The alpha and beta chains form an alternating ring which encloses part of the gamma chain. CF(1) is attached to CF(0) by a central stalk formed by the gamma and epsilon chains, while a peripheral stalk is formed by the delta and b chains.

The protein resides in the cell inner membrane. The catalysed reaction is ATP + H2O + 4 H(+)(in) = ADP + phosphate + 5 H(+)(out). Functionally, produces ATP from ADP in the presence of a proton gradient across the membrane. The alpha chain is a regulatory subunit. In Xylella fastidiosa (strain Temecula1 / ATCC 700964), this protein is ATP synthase subunit alpha.